Consider the following 627-residue polypeptide: Pro-interleukin-16 (627 aa).

Disordered stretches follow at residues 34–136 (HMPL…SIKQ), 162–267 (SSGE…LTRS), and 316–337 (GASPTSLSNEDSAANGCAETSG). At serine 217 the chain carries Phosphoserine. Polar residues predominate over residues 318-337 (SPTSLSNEDSAANGCAETSG). The interval 401-497 (KQLDSIHVTI…IVTRKLTPET (97 aa)) is interaction with PPP1R12A, PPP1R12B and PPP1R12C. PDZ domains follow at residues 407–492 (HVTI…VTRK) and 529–614 (TVTL…IKRK).

As to quaternary structure, homotetramer. Pro-interleukin-16 interacts (via PDZ 2 domain) with PPP1R12A, PPP1R12B and PPP1R12C. Pro-interleukin-16 interacts with GRIN2A. Pro-interleukin-16 interacts with GABPB1. Pro-interleukin-16 interacts (via PDZ 3 domain) with HDAC3.

The protein resides in the secreted. It is found in the cytoplasm. It localises to the nucleus. Functionally, interleukin-16 stimulates a migratory response in CD4+ lymphocytes, monocytes, and eosinophils. Primes CD4+ T-cells for IL-2 and IL-15 responsiveness. Also induces T-lymphocyte expression of interleukin 2 receptor. Ligand for CD4. In terms of biological role, pro-interleukin-16 is involved in cell cycle progression in T-cells. Appears to be involved in transcriptional regulation of SKP2 and is probably part of a transcriptional repression complex on the core promoter of the SKP2 gene. May act as a scaffold for GABPB1 (the DNA-binding subunit the GABP transcription factor complex) and HDAC3 thus maintaining transcriptional repression and blocking cell cycle progression in resting T-cells. The chain is Pro-interleukin-16 (IL16) from Saimiri sciureus (Common squirrel monkey).